The following is a 343-amino-acid chain: Methylthioribose-1-phosphate isomerase (343 aa).

Residues 44–46 (RGA), arginine 85, and glutamine 192 contribute to the substrate site. Residue aspartate 233 is the Proton donor of the active site. 243–244 (NK) lines the substrate pocket.

Belongs to the eIF-2B alpha/beta/delta subunits family. MtnA subfamily.

It carries out the reaction 5-(methylsulfanyl)-alpha-D-ribose 1-phosphate = 5-(methylsulfanyl)-D-ribulose 1-phosphate. The protein operates within amino-acid biosynthesis; L-methionine biosynthesis via salvage pathway; L-methionine from S-methyl-5-thio-alpha-D-ribose 1-phosphate: step 1/6. In terms of biological role, catalyzes the interconversion of methylthioribose-1-phosphate (MTR-1-P) into methylthioribulose-1-phosphate (MTRu-1-P). This chain is Methylthioribose-1-phosphate isomerase, found in Carboxydothermus hydrogenoformans (strain ATCC BAA-161 / DSM 6008 / Z-2901).